The sequence spans 396 residues: Phosphoglycerate kinase (396 aa).

Residues 21 to 23 (DLN), Arg-36, 59 to 62 (HLGR), Arg-113, and Arg-146 each bind substrate. ATP contacts are provided by residues Lys-197, Glu-319, and 345-348 (GGDT).

The protein belongs to the phosphoglycerate kinase family. Monomer.

Its subcellular location is the cytoplasm. It carries out the reaction (2R)-3-phosphoglycerate + ATP = (2R)-3-phospho-glyceroyl phosphate + ADP. It functions in the pathway carbohydrate degradation; glycolysis; pyruvate from D-glyceraldehyde 3-phosphate: step 2/5. This is Phosphoglycerate kinase from Legionella pneumophila (strain Corby).